The chain runs to 56 residues: Large ribosomal subunit protein bL33A (56 aa).

The protein belongs to the bacterial ribosomal protein bL33 family.

In Sorangium cellulosum (strain So ce56) (Polyangium cellulosum (strain So ce56)), this protein is Large ribosomal subunit protein bL33A.